A 145-amino-acid polypeptide reads, in one-letter code: Probable transport accessory protein MmpS2 (145 aa).

Residues 11 to 31 traverse the membrane as a helical segment; that stretch reads MWLLLAIVVVAVVGGLGIYRL.

The protein belongs to the MmpS family.

It localises to the cell membrane. The sequence is that of Probable transport accessory protein MmpS2 (mmpS2) from Mycobacterium bovis (strain ATCC BAA-935 / AF2122/97).